Reading from the N-terminus, the 758-residue chain is EMILIN-3 (758 aa).

A signal peptide spans 1 to 21; the sequence is MGRRLSVWLCTVAALLSGAQA. An EMI domain is found at 54 to 130; sequence HKSLCAYVVH…PGLTGESCPE (77 aa). 3 disulfide bridges follow: cysteine 58–cysteine 120, cysteine 85–cysteine 91, and cysteine 119–cysteine 128. Asparagine 65 carries an N-linked (GlcNAc...) asparagine glycan. Positions 131-178 are disordered; sequence HLTDHGATPPHQEPEPQIPLGQLGPGPRPSPYSREAPRPRGRKGQGPF. The stretch at 379–401 forms a coiled coil; it reads SQLALISARVDSLERNLQAVTET. Asparagine 436 carries an N-linked (GlcNAc...) asparagine glycan. 2 coiled-coil regions span residues 460–483 and 528–567; these read GSTLEQRVQSLEERLATLTGELSP and AEVKAWQSRSEALLHQVARHTALLQQLNGTVAEVQGQLAE. 2 N-linked (GlcNAc...) asparagine glycosylation sites follow: asparagine 555 and asparagine 609. Coiled-coil stretches lie at residues 642-677 and 720-753; these read RQVLNLRGELEQLKAGMANVARGLSRCRDTAQELQH and HIDKLNHTLAQHTQDIARLRDDLLDCRAQLAEVR. Residue asparagine 725 is glycosylated (N-linked (GlcNAc...) asparagine).

The protein resides in the secreted. It is found in the extracellular space. Its subcellular location is the extracellular matrix. It localises to the cytoplasm. This Mus musculus (Mouse) protein is EMILIN-3 (Emilin3).